Consider the following 752-residue polypeptide: Endo-1,4-beta-xylanase 3 (752 aa).

The segment at 1 to 22 is disordered; the sequence is MEKNTNTNHTSDDNNDKNHTNE. The segment covering 10–22 has biased composition (basic and acidic residues); sequence TSDDNNDKNHTNE. 2 consecutive CBM-cenC domains span residues 26–163 and 197–344; these read KIIL…EGPP and NIVE…VQGP. In terms of domain architecture, GH10 spans 397–692; it reads FPYIVKVKQT…NEAGKRFLEV (296 aa). Glutamate 526 serves as the catalytic Proton donor. The Nucleophile role is filled by glutamate 627.

Belongs to the glycosyl hydrolase 10 (cellulase F) family. As to expression, confined to immature xylems.

It catalyses the reaction Endohydrolysis of (1-&gt;4)-beta-D-xylosidic linkages in xylans.. Its pathway is glycan degradation; xylan degradation. In terms of biological role, binds to and hydrolyzes insoluble and soluble xylan substrates. The protein is Endo-1,4-beta-xylanase 3 of Arabidopsis thaliana (Mouse-ear cress).